A 371-amino-acid polypeptide reads, in one-letter code: RxLR effector protein PITG_12731 (371 aa).

An N-terminal signal peptide occupies residues 1–24; sequence MRFYSVLLTIVTLIASTYDAKVNA. A RxLR-dEER motif is present at residues 43–53; the sequence is RMLRADHADER.

The protein belongs to the RxLR effector family.

It is found in the secreted. The protein localises to the host nucleus. Its subcellular location is the host cytoplasm. Its function is as follows. Effector that enhances P.infestans colonization of Nicotiana benthamiana leaves. This Phytophthora infestans (strain T30-4) (Potato late blight agent) protein is RxLR effector protein PITG_12731.